The sequence spans 471 residues: MELNSSFWTLIKTKMKSRNDNNKLLDTWLDPIEYVSTTGSADRPRLVLGVPNALHQYFVIENLQDKIYTEISDTYGKPFEVEFSITGNKINSHIETSTTPDEVLSGSEILQAQLARAQNIQPTQPRSSSDTLNSELTFSTFVVGKNSEFAHAACYNVARNPGADDYNPLYIYGPVGMGKTHLLHAAGNHIREQYQHLRITYISAERFMNECISAIRRHEMDKFRQKYRENSDILLVDDVQFIARGEAVQEEFFHTVNSFIDSRKQVILASDRMPKDIHGLEDRSRTRLERGLIADITMPDLETRIAILRYKAEKYNVRLPEDVVNYIARISKRSIRELEGNLKKVKMFSELQGLPIDHELVKRILAHHETQSTISVEEIMKLVADHFKVRVLDLKSSTRAKPIVVPRQIAMYLIKKFLDKSLVDIGKSFGGKDHTTVMNALERVKNLQAADQDIAKDIEDLEQRIHNITRV.

The segment at Met1–Lys77 is domain I, interacts with DnaA modulators. The domain II stretch occupies residues Lys77–Asp130. The interval Thr131–Ser349 is domain III, AAA+ region. Gly176, Gly178, Lys179, and Thr180 together coordinate ATP. Residues Glu350–Val471 form a domain IV, binds dsDNA region.

The protein belongs to the DnaA family. Oligomerizes as a right-handed, spiral filament on DNA at oriC.

The protein localises to the cytoplasm. Its function is as follows. Plays an essential role in the initiation and regulation of chromosomal replication. ATP-DnaA binds to the origin of replication (oriC) to initiate formation of the DNA replication initiation complex once per cell cycle. Binds the DnaA box (a 9 base pair repeat at the origin) and separates the double-stranded (ds)DNA. Forms a right-handed helical filament on oriC DNA; dsDNA binds to the exterior of the filament while single-stranded (ss)DNA is stabiized in the filament's interior. The ATP-DnaA-oriC complex binds and stabilizes one strand of the AT-rich DNA unwinding element (DUE), permitting loading of DNA polymerase. After initiation quickly degrades to an ADP-DnaA complex that is not apt for DNA replication. Binds acidic phospholipids. The protein is Chromosomal replication initiator protein DnaA of Bdellovibrio bacteriovorus (strain ATCC 15356 / DSM 50701 / NCIMB 9529 / HD100).